The chain runs to 65 residues: Weak neurotoxin 8 (65 aa).

5 disulfide bridges follow: cysteine 3/cysteine 24, cysteine 6/cysteine 11, cysteine 17/cysteine 42, cysteine 46/cysteine 57, and cysteine 58/cysteine 63.

Belongs to the three-finger toxin family. Ancestral subfamily. Orphan group II sub-subfamily. As to expression, expressed by the venom gland.

It localises to the secreted. Its function is as follows. Binds with low affinity to muscular (alpha-1-beta-1-delta-epsilon/CHRNA1-CHRNB1-CHRND-CHRNE) and very low affinity to neuronal (alpha-7/CHRNA7) nicotinic acetylcholine receptor (nAChR). The chain is Weak neurotoxin 8 from Naja naja (Indian cobra).